The primary structure comprises 793 residues: Lon protease 1 (793 aa).

Positions 8–202 (VPVIPLKNSV…KLLDRLQELK (195 aa)) constitute a Lon N-terminal domain. 354 to 361 (GPPGVGKT) is a binding site for ATP. Residues 590–770 (LLPPGVVTGL…NEVLKITLGV (181 aa)) enclose the Lon proteolytic domain. Residues serine 676 and lysine 719 contribute to the active site.

The protein belongs to the peptidase S16 family. As to quaternary structure, homohexamer. Organized in a ring with a central cavity.

It localises to the cytoplasm. The enzyme catalyses Hydrolysis of proteins in presence of ATP.. In terms of biological role, ATP-dependent serine protease that mediates the selective degradation of mutant and abnormal proteins as well as certain short-lived regulatory proteins. Required for cellular homeostasis and for survival from DNA damage and developmental changes induced by stress. Degrades polypeptides processively to yield small peptide fragments that are 5 to 10 amino acids long. Binds to DNA in a double-stranded, site-specific manner. The chain is Lon protease 1 from Bdellovibrio bacteriovorus (strain ATCC 15356 / DSM 50701 / NCIMB 9529 / HD100).